The primary structure comprises 429 residues: Adenylosuccinate synthetase (429 aa).

Residues 12-18 (GDEGKGK) and 40-42 (GHT) contribute to the GTP site. Catalysis depends on Asp-13, which acts as the Proton acceptor. Residues Asp-13 and Gly-40 each contribute to the Mg(2+) site. Residues 13–16 (DEGK), 38–41 (NAGH), Thr-128, Arg-142, Gln-223, Thr-238, and Arg-302 contribute to the IMP site. His-41 (proton donor) is an active-site residue. 298 to 304 (TTTGRAR) contacts substrate. Residues Arg-304, 330 to 332 (SID), and 412 to 414 (SVG) contribute to the GTP site.

The protein belongs to the adenylosuccinate synthetase family. As to quaternary structure, homodimer. Requires Mg(2+) as cofactor.

It is found in the cytoplasm. The catalysed reaction is IMP + L-aspartate + GTP = N(6)-(1,2-dicarboxyethyl)-AMP + GDP + phosphate + 2 H(+). It functions in the pathway purine metabolism; AMP biosynthesis via de novo pathway; AMP from IMP: step 1/2. Plays an important role in the de novo pathway of purine nucleotide biosynthesis. Catalyzes the first committed step in the biosynthesis of AMP from IMP. The polypeptide is Adenylosuccinate synthetase (Oceanobacillus iheyensis (strain DSM 14371 / CIP 107618 / JCM 11309 / KCTC 3954 / HTE831)).